We begin with the raw amino-acid sequence, 514 residues long: Histidine ammonia-lyase (514 aa).

The segment at residues 146–148 (ASG) is a cross-link (5-imidazolinone (Ala-Gly)). Residue serine 147 is modified to 2,3-didehydroalanine (Ser).

Belongs to the PAL/histidase family. In terms of processing, contains an active site 4-methylidene-imidazol-5-one (MIO), which is formed autocatalytically by cyclization and dehydration of residues Ala-Ser-Gly.

The protein localises to the cytoplasm. It carries out the reaction L-histidine = trans-urocanate + NH4(+). It functions in the pathway amino-acid degradation; L-histidine degradation into L-glutamate; N-formimidoyl-L-glutamate from L-histidine: step 1/3. The chain is Histidine ammonia-lyase from Clostridium tetani (strain Massachusetts / E88).